The chain runs to 431 residues: Enolase (431 aa).

Q167 provides a ligand contact to (2R)-2-phosphoglycerate. Residue E209 is the Proton donor of the active site. Mg(2+)-binding residues include D246, E289, and D316. 4 residues coordinate (2R)-2-phosphoglycerate: K341, R370, S371, and K392. Residue K341 is the Proton acceptor of the active site.

Belongs to the enolase family. As to quaternary structure, component of the RNA degradosome, a multiprotein complex involved in RNA processing and mRNA degradation. Mg(2+) serves as cofactor.

It is found in the cytoplasm. The protein resides in the secreted. Its subcellular location is the cell surface. The enzyme catalyses (2R)-2-phosphoglycerate = phosphoenolpyruvate + H2O. It participates in carbohydrate degradation; glycolysis; pyruvate from D-glyceraldehyde 3-phosphate: step 4/5. In terms of biological role, catalyzes the reversible conversion of 2-phosphoglycerate (2-PG) into phosphoenolpyruvate (PEP). It is essential for the degradation of carbohydrates via glycolysis. This chain is Enolase, found in Shewanella sp. (strain ANA-3).